A 306-amino-acid polypeptide reads, in one-letter code: D-glucosamine-6-phosphate 4-epimerase (306 aa).

Residues 19–153 (DIPGVKTAEK…TGSNYRVQDL (135 aa)) form the SIS domain. Glu-200 acts as the Proton acceptor in catalysis. His-216 serves as the catalytic Proton donor. The active-site Proton acceptor is Arg-296.

This sequence belongs to the PGI/PMI family.

The catalysed reaction is D-glucosamine 6-phosphate = D-galactosamine 6-phosphate. In terms of biological role, involved in the synthesis of UDP-N-acetylgalactosamine (UDP-GalNAc). Catalyzes the conversion of glucosamine-6-phosphate (GlcN-6-P) to galactosamine-6-phosphate (GalN-6-P). This is D-glucosamine-6-phosphate 4-epimerase from Sulfolobus acidocaldarius (strain ATCC 33909 / DSM 639 / JCM 8929 / NBRC 15157 / NCIMB 11770).